The sequence spans 453 residues: Ribosome biogenesis protein YTM1 (453 aa).

Residues V8–R89 form a ubiquitin-like (UBL) domain region. The interval S99–S453 is sufficient for interaction with ERB1 and association with 66S pre-ribosomes. WD repeat units lie at residues S101–Y139, G141–P179, G199–V237, S278–T318, T320–I359, G366–T406, and G417–S453.

It belongs to the WD repeat WDR12/YTM1 family. As to quaternary structure, component of the NOP7 complex, composed of ERB1, NOP7 and YTM1. The complex is held together by ERB1, which interacts with NOP7 via its N-terminal domain and with YTM1 via a high-affinity interaction between the seven-bladed beta-propeller domains of the 2 proteins. The NOP7 complex associates with the 66S pre-ribosome. Interacts (via UBL domain) with MDN1 (via VWFA/MIDAS domain).

It localises to the nucleus. The protein localises to the nucleolus. The protein resides in the nucleoplasm. Its function is as follows. Component of the NOP7 complex, which is required for maturation of the 25S and 5.8S ribosomal RNAs and formation of the 60S ribosome. The sequence is that of Ribosome biogenesis protein YTM1 from Vanderwaltozyma polyspora (strain ATCC 22028 / DSM 70294 / BCRC 21397 / CBS 2163 / NBRC 10782 / NRRL Y-8283 / UCD 57-17) (Kluyveromyces polysporus).